A 182-amino-acid chain; its full sequence is Methyl-coenzyme M reductase operon protein C (182 aa).

As to quaternary structure, MCR is composed of three subunits: alpha, beta, and gamma. The function of proteins C and D is not known.

The chain is Methyl-coenzyme M reductase operon protein C (mcrC) from Methanococcus voltae.